The sequence spans 151 residues: Small ribosomal subunit protein uS15 (151 aa).

An N6-acetyllysine; alternate modification is found at lysine 27. N6-succinyllysine; alternate is present on lysine 27. Lysine 27 participates in a covalent cross-link: Glycyl lysine isopeptide (Lys-Gly) (interchain with G-Cter in ubiquitin). Serine 30 carries the post-translational modification Phosphoserine. The residue at position 34 (lysine 34) is an N6-succinyllysine. Tyrosine 38 bears the Phosphotyrosine mark. A Glycyl lysine isopeptide (Lys-Gly) (interchain with G-Cter in SUMO2) cross-link involves residue lysine 43.

It belongs to the universal ribosomal protein uS15 family. Component of the small ribosomal subunit. Part of the small subunit (SSU) processome, composed of more than 70 proteins and the RNA chaperone small nucleolar RNA (snoRNA) U3. In terms of processing, ubiquitinated at Lys-27 by RNF14 and RNF25 in response to ribosome collisions (ribosome stalling).

The protein resides in the cytoplasm. It is found in the nucleus. The protein localises to the nucleolus. Component of the small ribosomal subunit. The ribosome is a large ribonucleoprotein complex responsible for the synthesis of proteins in the cell. Part of the small subunit (SSU) processome, first precursor of the small eukaryotic ribosomal subunit. During the assembly of the SSU processome in the nucleolus, many ribosome biogenesis factors, an RNA chaperone and ribosomal proteins associate with the nascent pre-rRNA and work in concert to generate RNA folding, modifications, rearrangements and cleavage as well as targeted degradation of pre-ribosomal RNA by the RNA exosome. The polypeptide is Small ribosomal subunit protein uS15 (RPS13) (Cricetulus griseus (Chinese hamster)).